The sequence spans 342 residues: Glucokinase (342 aa).

Residue 15-20 (GDVGGT) participates in ATP binding.

Belongs to the bacterial glucokinase family.

The protein resides in the cytoplasm. The enzyme catalyses D-glucose + ATP = D-glucose 6-phosphate + ADP + H(+). The sequence is that of Glucokinase from Ralstonia nicotianae (strain ATCC BAA-1114 / GMI1000) (Ralstonia solanacearum).